Here is a 99-residue protein sequence, read N- to C-terminus: DNA-directed RNA polymerase subunit omega (99 aa).

This sequence belongs to the RNA polymerase subunit omega family. The RNAP catalytic core consists of 2 alpha, 1 beta, 1 beta' and 1 omega subunit. When a sigma factor is associated with the core the holoenzyme is formed, which can initiate transcription.

It carries out the reaction RNA(n) + a ribonucleoside 5'-triphosphate = RNA(n+1) + diphosphate. Its function is as follows. Promotes RNA polymerase assembly. Latches the N- and C-terminal regions of the beta' subunit thereby facilitating its interaction with the beta and alpha subunits. The polypeptide is DNA-directed RNA polymerase subunit omega (Xanthomonas oryzae pv. oryzae (strain MAFF 311018)).